The chain runs to 572 residues: Proline--tRNA ligase (572 aa).

This sequence belongs to the class-II aminoacyl-tRNA synthetase family. ProS type 1 subfamily. Homodimer.

The protein localises to the cytoplasm. The enzyme catalyses tRNA(Pro) + L-proline + ATP = L-prolyl-tRNA(Pro) + AMP + diphosphate. Catalyzes the attachment of proline to tRNA(Pro) in a two-step reaction: proline is first activated by ATP to form Pro-AMP and then transferred to the acceptor end of tRNA(Pro). As ProRS can inadvertently accommodate and process non-cognate amino acids such as alanine and cysteine, to avoid such errors it has two additional distinct editing activities against alanine. One activity is designated as 'pretransfer' editing and involves the tRNA(Pro)-independent hydrolysis of activated Ala-AMP. The other activity is designated 'posttransfer' editing and involves deacylation of mischarged Ala-tRNA(Pro). The misacylated Cys-tRNA(Pro) is not edited by ProRS. The sequence is that of Proline--tRNA ligase from Salmonella choleraesuis (strain SC-B67).